Here is a 477-residue protein sequence, read N- to C-terminus: Proline--tRNA ligase (477 aa).

It belongs to the class-II aminoacyl-tRNA synthetase family. ProS type 3 subfamily. As to quaternary structure, homodimer.

It is found in the cytoplasm. The enzyme catalyses tRNA(Pro) + L-proline + ATP = L-prolyl-tRNA(Pro) + AMP + diphosphate. Its function is as follows. Catalyzes the attachment of proline to tRNA(Pro) in a two-step reaction: proline is first activated by ATP to form Pro-AMP and then transferred to the acceptor end of tRNA(Pro). In Methanocorpusculum labreanum (strain ATCC 43576 / DSM 4855 / Z), this protein is Proline--tRNA ligase.